Reading from the N-terminus, the 391-residue chain is Uroporphyrinogen decarboxylase, chloroplastic (391 aa).

Substrate is bound by residues 71 to 75, Phe-90, Ser-120, Asp-121, Tyr-198, Ser-253, and His-368; that span reads RQAGR.

This sequence belongs to the uroporphyrinogen decarboxylase family. As to quaternary structure, homodimer.

Its subcellular location is the plastid. It localises to the chloroplast. It catalyses the reaction uroporphyrinogen III + 4 H(+) = coproporphyrinogen III + 4 CO2. Its pathway is porphyrin-containing compound metabolism; protoporphyrin-IX biosynthesis; coproporphyrinogen-III from 5-aminolevulinate: step 4/4. In terms of biological role, catalyzes the decarboxylation of four acetate groups of uroporphyrinogen-III to yield coproporphyrinogen-III. The protein is Uroporphyrinogen decarboxylase, chloroplastic (DCUP) of Nicotiana tabacum (Common tobacco).